A 293-amino-acid chain; its full sequence is Undecaprenyl-diphosphatase (293 aa).

The next 6 membrane-spanning stretches (helical) occupy residues 74 to 94 (VLVF…AGVF), 107 to 127 (WMII…KDLI), 134 to 154 (MWIT…AEKM), 209 to 229 (FLLA…DAFA), 243 to 263 (VGTL…MKFV), and 271 to 291 (FAAY…LGML).

Belongs to the UppP family.

The protein resides in the cell membrane. It catalyses the reaction di-trans,octa-cis-undecaprenyl diphosphate + H2O = di-trans,octa-cis-undecaprenyl phosphate + phosphate + H(+). In terms of biological role, catalyzes the dephosphorylation of undecaprenyl diphosphate (UPP). Confers resistance to bacitracin. The chain is Undecaprenyl-diphosphatase from Corynebacterium glutamicum (strain R).